Reading from the N-terminus, the 476-residue chain is Bifunctional protein HldE (476 aa).

The segment at 1–319 (MKISLPAFEK…AALNLSHGES (319 aa)) is ribokinase. 195–198 (NMSE) contacts ATP. Asp-264 is an active-site residue. The cytidylyltransferase stretch occupies residues 345–476 (MTNGCFDILH…AIIENIMAKQ (132 aa)).

It in the N-terminal section; belongs to the carbohydrate kinase PfkB family. The protein in the C-terminal section; belongs to the cytidylyltransferase family. As to quaternary structure, homodimer.

The catalysed reaction is D-glycero-beta-D-manno-heptose 7-phosphate + ATP = D-glycero-beta-D-manno-heptose 1,7-bisphosphate + ADP + H(+). It catalyses the reaction D-glycero-beta-D-manno-heptose 1-phosphate + ATP + H(+) = ADP-D-glycero-beta-D-manno-heptose + diphosphate. It participates in nucleotide-sugar biosynthesis; ADP-L-glycero-beta-D-manno-heptose biosynthesis; ADP-L-glycero-beta-D-manno-heptose from D-glycero-beta-D-manno-heptose 7-phosphate: step 1/4. It functions in the pathway nucleotide-sugar biosynthesis; ADP-L-glycero-beta-D-manno-heptose biosynthesis; ADP-L-glycero-beta-D-manno-heptose from D-glycero-beta-D-manno-heptose 7-phosphate: step 3/4. Its function is as follows. Catalyzes the phosphorylation of D-glycero-D-manno-heptose 7-phosphate at the C-1 position to selectively form D-glycero-beta-D-manno-heptose-1,7-bisphosphate. Catalyzes the ADP transfer from ATP to D-glycero-beta-D-manno-heptose 1-phosphate, yielding ADP-D-glycero-beta-D-manno-heptose. The protein is Bifunctional protein HldE of Shewanella loihica (strain ATCC BAA-1088 / PV-4).